The primary structure comprises 317 residues: Ribosomal RNA large subunit methyltransferase F (317 aa).

The protein belongs to the methyltransferase superfamily. METTL16/RlmF family.

The protein localises to the cytoplasm. It carries out the reaction adenosine(1618) in 23S rRNA + S-adenosyl-L-methionine = N(6)-methyladenosine(1618) in 23S rRNA + S-adenosyl-L-homocysteine + H(+). Specifically methylates the adenine in position 1618 of 23S rRNA. In Pseudomonas putida (strain ATCC 700007 / DSM 6899 / JCM 31910 / BCRC 17059 / LMG 24140 / F1), this protein is Ribosomal RNA large subunit methyltransferase F.